Reading from the N-terminus, the 254-residue chain is MIRIGIHGASGKMGYEIISNLKNNEQAILSVAYTIEPMPFDVGDAIVTNDLKTLFDNSDVIIDFSIKDGAVNLINYARTNPKPLIIGTTGLGSEGDELIKLASSVMPILQATNMSLGVAVLNRLTEFASRVLDGFDIEIVEMHHRRKVDAPSGTALTLATHAAKARNLTLDSVRVSGRDGMIGARSKDEIAVMSLRGGDIVGRHTVGFYNDGEFIELNHTATSRATFAKGAIKAAIWIKSKEPKLYSIYDCLGL.

Residues 8-13, 87-89, and 111-114 each bind NAD(+); these read GASGKM, GTT, and ATNM. His143 acts as the Proton donor/acceptor in catalysis. His144 serves as a coordination point for (S)-2,3,4,5-tetrahydrodipicolinate. Residue Lys147 is the Proton donor of the active site. (S)-2,3,4,5-tetrahydrodipicolinate is bound at residue 153 to 154; sequence GT.

It belongs to the DapB family.

The protein resides in the cytoplasm. It catalyses the reaction (S)-2,3,4,5-tetrahydrodipicolinate + NAD(+) + H2O = (2S,4S)-4-hydroxy-2,3,4,5-tetrahydrodipicolinate + NADH + H(+). The enzyme catalyses (S)-2,3,4,5-tetrahydrodipicolinate + NADP(+) + H2O = (2S,4S)-4-hydroxy-2,3,4,5-tetrahydrodipicolinate + NADPH + H(+). The protein operates within amino-acid biosynthesis; L-lysine biosynthesis via DAP pathway; (S)-tetrahydrodipicolinate from L-aspartate: step 4/4. In terms of biological role, catalyzes the conversion of 4-hydroxy-tetrahydrodipicolinate (HTPA) to tetrahydrodipicolinate. This is 4-hydroxy-tetrahydrodipicolinate reductase from Campylobacter fetus subsp. fetus (strain 82-40).